The following is a 1719-amino-acid chain: Chromodomain-helicase-DNA-binding protein 1 (1719 aa).

Positions 1–10 (MNGHSDEESV) are enriched in basic and acidic residues. The interval 1–249 (MNGHSDEESV…EAEETKTDSD (249 aa)) is disordered. A compositionally biased stretch (low complexity) spans 34-62 (SSGSSSDGSSSQSGSSDSESGSESGSQSE). A compositionally biased stretch (basic and acidic residues) spans 66–85 (DTSREKKQVQAKPPKADGSE). A compositionally biased stretch (low complexity) spans 103 to 116 (KKQQQQQKAASSDS). The segment covering 117 to 133 (GSEEDSSSSEDSADDSS) has biased composition (acidic residues). Positions 149–160 (SGSGSVSGTGSD) are enriched in low complexity. Over residues 161–178 (SESEEDGDKSSCEESESD) the composition is skewed to acidic residues. Residues 184–207 (KVKSRKPPSRIKPKSGKKSTGQKK) show a composition bias toward basic residues. The segment covering 212-222 (SSEEEEDDDED) has biased composition (acidic residues). Residues 239–248 (KEAEETKTDS) are compositionally biased toward basic and acidic residues. Chromo domains are found at residues 268-360 (ETIE…RWLK) and 385-448 (QIVE…TPFK). The Helicase ATP-binding domain occupies 489–659 (AHSWCKGNSC…WSLLHFIMPE (171 aa)). 502-509 (DEMGLGKT) contributes to the ATP binding site. Residues 610 to 613 (DEAH) carry the DEAH box motif. Residues 788–939 (LLDKLLIRLR…HLVIQRMDTT (152 aa)) form the Helicase C-terminal domain. 3 disordered regions span residues 1076 to 1116 (ISFN…TIPR), 1319 to 1393 (QRLA…TPVH), and 1503 to 1719 (KKRQ…SRKT). Basic residues-rich tracts occupy residues 1103–1113 (KRPKKRGRPRT) and 1327–1342 (SKRRKTRNKKNKMKAS). Residues 1369 to 1380 (NKVNEIKSENKE) show a composition bias toward basic and acidic residues. The interval 1410–1512 (LDQKTFSVCK…KKRQESQQHN (103 aa)) is CHD1 helical C-terminal domain (CHCT). Residues 1511-1524 (HNDQNISSNVNTHV) are compositionally biased toward polar residues. 3 stretches are compositionally biased toward basic and acidic residues: residues 1526 to 1576 (RNPD…DSRK), 1585 to 1673 (GKDH…DHRA), and 1698 to 1710 (SPFEHSSDHKSTP).

Belongs to the SNF2/RAD54 helicase family. In terms of assembly, component of the SAGA complex. Interacts with SSRP1.

It is found in the nucleus. The protein resides in the chromosome. It localises to the centromere. The catalysed reaction is ATP + H2O = ADP + phosphate + H(+). In terms of biological role, ATP-dependent chromatin-remodeling factor which functions as substrate recognition component of the transcription regulatory histone acetylation (HAT) complex SAGA. Regulates polymerase II transcription. Also required for efficient transcription by RNA polymerase I, and more specifically the polymerase I transcription termination step. Regulates negatively DNA replication. Not only involved in transcription-related chromatin remodeling, but also required to maintain a specific chromatin configuration across the genome. Required for maintaining open chromatin and pluripotency in embryonic stem cells. Required for centromeric localization of CENPA. This is Chromodomain-helicase-DNA-binding protein 1 (CHD1) from Gallus gallus (Chicken).